The sequence spans 273 residues: Diphthine methyl ester synthase (273 aa).

S-adenosyl-L-methionine-binding positions include Leu10, Asp87, Gly90, 115–116 (SI), Leu166, Val224, and His249.

This sequence belongs to the diphthine synthase family.

The catalysed reaction is 2-[(3S)-amino-3-carboxypropyl]-L-histidyl-[translation elongation factor 2] + 4 S-adenosyl-L-methionine = diphthine methyl ester-[translation elongation factor 2] + 4 S-adenosyl-L-homocysteine + 3 H(+). It participates in protein modification; peptidyl-diphthamide biosynthesis. S-adenosyl-L-methionine-dependent methyltransferase that catalyzes four methylations of the modified target histidine residue in translation elongation factor 2 (EF-2), to form an intermediate called diphthine methyl ester. The four successive methylation reactions represent the second step of diphthamide biosynthesis. The chain is Diphthine methyl ester synthase (dph5) from Dictyostelium discoideum (Social amoeba).